A 288-amino-acid polypeptide reads, in one-letter code: 18S rRNA aminocarboxypropyltransferase (288 aa).

Residues S43, V91, L114, and W129 each contribute to the S-adenosyl-L-methionine site. Positions I209 to L221 are enriched in polar residues. The interval I209 to N267 is disordered. Basic and acidic residues predominate over residues N229 to P253.

The protein belongs to the TDD superfamily. TSR3 family.

The protein resides in the cytoplasm. The protein localises to the nucleus. It carries out the reaction an N(1)-methylpseudouridine in rRNA + S-adenosyl-L-methionine = N(1)-methyl-N(3)-[(3S)-3-amino-3-carboxypropyl]pseudouridine in rRNA + S-methyl-5'-thioadenosine + H(+). It catalyses the reaction N(1)-methylpseudouridine(1191) in yeast 18S rRNA + S-adenosyl-L-methionine = N(1)-methyl-N(3)-[(3S)-3-amino-3-carboxypropyl]pseudouridine(1191) in yeast 18S rRNA + S-methyl-5'-thioadenosine + H(+). Its function is as follows. Aminocarboxypropyltransferase that catalyzes the aminocarboxypropyl transfer on pseudouridine at position 1191 (Psi1191) in 18S rRNA. It constitutes the last step in biosynthesis of the hypermodified N1-methyl-N3-(3-amino-3-carboxypropyl) pseudouridine (m1acp3-Psi) conserved in eukaryotic 18S rRNA. Required for processing 35S pre-rRNA at site D. This is 18S rRNA aminocarboxypropyltransferase from Schizosaccharomyces pombe (strain 972 / ATCC 24843) (Fission yeast).